Consider the following 261-residue polypeptide: Small ribosomal subunit protein uS2 (261 aa).

Residues 223–261 form a disordered region; it reads EGKQGQDDSEDVEKEMADKAAAEDDEEESIEVVVEKSED.

This sequence belongs to the universal ribosomal protein uS2 family.

This Lactobacillus johnsonii (strain CNCM I-12250 / La1 / NCC 533) protein is Small ribosomal subunit protein uS2.